Reading from the N-terminus, the 527-residue chain is D-3-phosphoglycerate dehydrogenase (527 aa).

Residues 149–150 (RV), Asp169, 228–230 (AAR), and Asp254 each bind NAD(+). Arg230 is a catalytic residue. The active site involves Glu259. His278 (proton donor) is an active-site residue. Position 278 to 281 (278 to 281 (HIAA)) interacts with NAD(+). The region spanning 453 to 527 (YIISLHEDKP…GIIDATYVEL (75 aa)) is the ACT domain.

It belongs to the D-isomer specific 2-hydroxyacid dehydrogenase family.

The enzyme catalyses (2R)-3-phosphoglycerate + NAD(+) = 3-phosphooxypyruvate + NADH + H(+). It functions in the pathway amino-acid biosynthesis; L-serine biosynthesis; L-serine from 3-phospho-D-glycerate: step 1/3. The protein is D-3-phosphoglycerate dehydrogenase (serA) of Archaeoglobus fulgidus (strain ATCC 49558 / DSM 4304 / JCM 9628 / NBRC 100126 / VC-16).